Reading from the N-terminus, the 404-residue chain is tRNA-specific 2-thiouridylase MnmA (404 aa).

Residues 42 to 49 (GLSGGVDS) and leucine 68 each bind ATP. Cysteine 129 (nucleophile) is an active-site residue. Cysteine 129 and cysteine 239 are joined by a disulfide. ATP is bound at residue glycine 154. Residues 189-191 (KDQ) form an interaction with tRNA region. The Cysteine persulfide intermediate role is filled by cysteine 239. Residues 344-345 (RY) form an interaction with tRNA region.

The protein belongs to the MnmA/TRMU family.

The protein localises to the cytoplasm. The enzyme catalyses S-sulfanyl-L-cysteinyl-[protein] + uridine(34) in tRNA + AH2 + ATP = 2-thiouridine(34) in tRNA + L-cysteinyl-[protein] + A + AMP + diphosphate + H(+). Its function is as follows. Catalyzes the 2-thiolation of uridine at the wobble position (U34) of tRNA, leading to the formation of s(2)U34. The sequence is that of tRNA-specific 2-thiouridylase MnmA from Prochlorococcus marinus (strain NATL1A).